The following is a 670-amino-acid chain: tRNA 5-methylaminomethyl-2-thiouridine biosynthesis bifunctional protein MnmC (670 aa).

A tRNA (mnm(5)s(2)U34)-methyltransferase region spans residues 1-242; the sequence is MTFSVQHAEI…KRECLSGLKI (242 aa). The FAD-dependent cmnm(5)s(2)U34 oxidoreductase stretch occupies residues 269–670; it reads IGGGIASFCA…KKWLKGSKVE (402 aa).

It in the N-terminal section; belongs to the methyltransferase superfamily. tRNA (mnm(5)s(2)U34)-methyltransferase family. In the C-terminal section; belongs to the DAO family. FAD is required as a cofactor.

It is found in the cytoplasm. It carries out the reaction 5-aminomethyl-2-thiouridine(34) in tRNA + S-adenosyl-L-methionine = 5-methylaminomethyl-2-thiouridine(34) in tRNA + S-adenosyl-L-homocysteine + H(+). Catalyzes the last two steps in the biosynthesis of 5-methylaminomethyl-2-thiouridine (mnm(5)s(2)U) at the wobble position (U34) in tRNA. Catalyzes the FAD-dependent demodification of cmnm(5)s(2)U34 to nm(5)s(2)U34, followed by the transfer of a methyl group from S-adenosyl-L-methionine to nm(5)s(2)U34, to form mnm(5)s(2)U34. The polypeptide is tRNA 5-methylaminomethyl-2-thiouridine biosynthesis bifunctional protein MnmC (Haemophilus influenzae (strain 86-028NP)).